The following is a 189-amino-acid chain: Accessory gene regulator protein B (189 aa).

The next 5 helical transmembrane spans lie at 50–70, 83–103, 105–125, 143–163, and 164–184; these read VSLLCHMFLYTLTVHLTFFFI, LLCYIQSVIYFVLLPWIVGYV, VSSLIMYTLALVGLIIISIYA, KIKAICLTLIFLLISLFLNEP, and YQQLMLLGIVIISILQFPIFF.

It belongs to the AgrB family.

Its subcellular location is the cell membrane. Its function is as follows. Essential for the production of a quorum sensing system signal molecule, the autoinducing peptide (AIP). This quorum sensing system is responsible for the regulation of the expression of virulence factor genes. Involved in the proteolytic processing of AgrD, the precursor of AIP. The polypeptide is Accessory gene regulator protein B (Staphylococcus saprophyticus subsp. saprophyticus (strain ATCC 15305 / DSM 20229 / NCIMB 8711 / NCTC 7292 / S-41)).